A 583-amino-acid polypeptide reads, in one-letter code: Threonine--tRNA ligase (583 aa).

Residues aspartate 185–proline 478 are catalytic. Positions 278, 329, and 455 each coordinate Zn(2+).

This sequence belongs to the class-II aminoacyl-tRNA synthetase family. Homodimer. The cofactor is Zn(2+).

It localises to the cytoplasm. The enzyme catalyses tRNA(Thr) + L-threonine + ATP = L-threonyl-tRNA(Thr) + AMP + diphosphate + H(+). Catalyzes the attachment of threonine to tRNA(Thr) in a two-step reaction: L-threonine is first activated by ATP to form Thr-AMP and then transferred to the acceptor end of tRNA(Thr). Also edits incorrectly charged L-seryl-tRNA(Thr). This is Threonine--tRNA ligase from Borrelia turicatae (strain 91E135).